A 576-amino-acid chain; its full sequence is 9-cis-epoxycarotenoid dioxygenase NCED2, chloroplastic (576 aa).

Residues 1-34 (MEVPIAAMTFAHPANVMTLASRQPKSKRSHISPA) constitute a chloroplast transit peptide. Residues histidine 270, histidine 319, histidine 385, and histidine 563 each coordinate Fe cation.

This sequence belongs to the carotenoid oxygenase family. Requires Fe(2+) as cofactor.

Its subcellular location is the plastid. It is found in the chloroplast. It carries out the reaction a 9-cis-epoxycarotenoid + O2 = a 12'-apo-carotenal + 2-cis,4-trans-xanthoxin. It catalyses the reaction 9-cis-violaxanthin + O2 = (3S,5R,6S)-5,6-epoxy-3-hydroxy-5,6-dihydro-12'-apo-beta-caroten-12'-al + 2-cis,4-trans-xanthoxin. The enzyme catalyses 9'-cis-neoxanthin + O2 = (3S,5R,6R)-3,5-dihydroxy-6,7-didehydro-5,6-dihydro-12'-apo-beta-caroten-12'-al + 2-cis,4-trans-xanthoxin. Has a 11,12(11',12') 9-cis epoxycarotenoid cleavage activity. Catalyzes the first step of abscisic-acid biosynthesis from carotenoids. The polypeptide is 9-cis-epoxycarotenoid dioxygenase NCED2, chloroplastic (Oryza sativa subsp. japonica (Rice)).